The chain runs to 339 residues: Adenylosuccinate synthetase (339 aa).

GTP-binding positions include 12–18 and 42–44; these read GDEGKGS and GHS. The active-site Proton acceptor is the Asp13. Positions 13 and 42 each coordinate Mg(2+). IMP contacts are provided by residues 13–16, 40–43, Thr127, Arg141, Gln179, Thr194, and Arg256; these read DEGK and NAGH. His43 acts as the Proton donor in catalysis. 252 to 258 is a substrate binding site; the sequence is TVTGRRR. Residues Arg258, 284-286, and 324-326 contribute to the GTP site; these read MLD and KTG.

The protein belongs to the adenylosuccinate synthetase family. As to quaternary structure, homodimer. Mg(2+) is required as a cofactor.

It is found in the cytoplasm. The catalysed reaction is IMP + L-aspartate + GTP = N(6)-(1,2-dicarboxyethyl)-AMP + GDP + phosphate + 2 H(+). It functions in the pathway purine metabolism; AMP biosynthesis via de novo pathway; AMP from IMP: step 1/2. In terms of biological role, plays an important role in the de novo pathway of purine nucleotide biosynthesis. Catalyzes the first committed step in the biosynthesis of AMP from IMP. In Thermococcus sibiricus (strain DSM 12597 / MM 739), this protein is Adenylosuccinate synthetase.